The chain runs to 69 residues: Chondroitin proteoglycan 9 (69 aa).

Residues 1–19 form the signal peptide; that stretch reads MHLWQLVLLVILFFGAAFG. Ser-25 and Ser-27 each carry an O-linked (Xyl...) (chondroitin sulfate) serine glycan.

The polypeptide is Chondroitin proteoglycan 9 (Caenorhabditis elegans).